Reading from the N-terminus, the 464-residue chain is Neuronal acetylcholine receptor subunit beta-3 (464 aa).

An N-terminal signal peptide occupies residues 1–30 (MTGFLRVFLVLSATLSGSWVTLTATAGLSS). Topologically, residues 31–238 (VAEHEDALLR…VTYSFVLRRL (208 aa)) are extracellular. Residues N55 and N172 are each glycosylated (N-linked (GlcNAc...) asparagine). C159 and C173 form a disulfide bridge. 3 consecutive transmembrane segments (helical) span residues 239-263 (PLFY…VFYL), 271-288 (LSLS…LLVI), and 305-326 (YLLF…VINV). Residues 327–434 (HHRSSSTYHP…WKFVAQVLDR (108 aa)) are Cytoplasmic-facing. A helical membrane pass occupies residues 435 to 453 (IFLWLFLIASVLGSILIFI).

The protein belongs to the ligand-gated ion channel (TC 1.A.9) family. Acetylcholine receptor (TC 1.A.9.1) subfamily. Beta-3/CHRNB3 sub-subfamily. Neuronal AChR seems to be composed of two different type of subunits: alpha and beta. CHRNB3/beta-3 subunit is only able to form functional nAChRs when co-assembled with another beta subunit. Participates in pentameric assemblies along with CHRNA4/alpha-4 and CHRNB2/beta-2 subunits and with CHRNA6/alpha-6 as well, forming stoichiometries such as (CHRNA3:CHRNB4)2:CHRNB3, (CHRNA4:CHRNB2)2:CHRNB3 or (CHRNA6:CHRNB2)2:CHRNB3.

It localises to the synaptic cell membrane. It is found in the cell membrane. The catalysed reaction is Ca(2+)(in) = Ca(2+)(out). It carries out the reaction K(+)(in) = K(+)(out). It catalyses the reaction Na(+)(in) = Na(+)(out). Activated by a myriad of ligands such as acetylcholine, cytisine, nicotine, choline and epibatidine. In terms of biological role, component of neuronal acetylcholine receptors (nAChRs) that function as pentameric, ligand-gated cation channels with high calcium permeability among other activities. nAChRs are excitatory neurotrasnmitter receptors formed by a collection of nAChR subunits known to mediate synaptic transmission in the nervous system and the neuromuscular junction. Each nAchR subunit confers differential attributes to channel properties, including activation, deactivation and desensitization kinetics, pH sensitivity, cation permeability, and binding to allosteric modulators. Has an accessory rather than functional role and is only able to form functional nAChRs when co-assembled with another beta subunit. Participates in pentameric assemblies along with CHRNA3, CHRNA4, CHRNA6, CHRNB2 and CHRNB4. Modulates receptor assembly and increases receptor sensitivity to nicotine when associated with CHRNB2, CHRNA4 and/or CHRNA6 as well as CHRNA3 and CHRNB4. Seems to play a role in nicotine addiction. In Rattus norvegicus (Rat), this protein is Neuronal acetylcholine receptor subunit beta-3 (Chrnb3).